The chain runs to 534 residues: Cytochrome P450 monooxygenase ascG (534 aa).

Residues 13–33 traverse the membrane as a helical segment; sequence FVASFPALSAAAGLIVAISFI. A glycan (N-linked (GlcNAc...) asparagine) is linked at Asn-466. Cys-469 contributes to the heme binding site.

Belongs to the cytochrome P450 family. Heme is required as a cofactor.

It localises to the membrane. The catalysed reaction is ilicicolin C + NADPH + O2 + H(+) = ascochlorin + NADP(+) + 2 H2O. It functions in the pathway secondary metabolite biosynthesis; terpenoid biosynthesis. In terms of biological role, cytochrome P450 monooxygenase; part of the asc-1 gene cluster that mediates the biosynthesis of both ascochlorin and ascofuranone, a strong inhibitor of cyanide-insensitive alternative oxidases and a promising drug candidate against African trypanosomiasis. The first step in the pathway is performed by the non-reducing polyketide synthase ascC that produces orsellinic acid by condensing acetyl-CoA with 3 malonyl-CoA units. Orsellinic acid is then prenylated by the prenyltransferase ascA to yield ilicicolinic acid B. Ilicicolinic acid B is further reduced to ilicicolin B by the reductase ascB. The halogenase ascD then chlorinates ilicicolin B to produce ilicicolin A which is converted to ilicicolin A epoxide by the cytochrome P450 monooxygenase ascE that catalyzes stereoselective epoxidation of the terminal double bond of the prenyl group. Ilicicolin A epoxide is the last common precursor for the biosynthesis of ascofuranone and ascochlorin. The terpene cyclase ascF produces a monocyclic terpene, and the cyclization reaction is proposed to be initiated by protonation of the terminal epoxide of ilicicolin A epoxide to generate a monocyclic tertiarycation, which is followed by a series of hydride and methyl shifts with abstraction of proton, leading to the formation of the (14S,15R,19R)-trimethylcyclohexanone ring structure of ilicicolin C, which is finally reduced to ascochlorin by the dehydrogenase ascG. On the other hand, ilicicolin A epoxide is hydroxylated by the cytochrome P450 monooxygenase ascH, and the resultant product is cyclized by the terpene cyclase ascI to ascofuranol via protonation-initiated epoxide ring opening, which facilitates the 6-endo-tet cyclization to form the tetrahy-drofuran ring. Finally, ascofuranol is oxidized into ascofuranone by ascJ. The polypeptide is Cytochrome P450 monooxygenase ascG (Acremonium egyptiacum (Oospora egyptiaca)).